The following is a 79-amino-acid chain: Sec-independent protein translocase protein TatA (79 aa).

Residues 1 to 21 traverse the membrane as a helical segment; the sequence is MGGFTSIWHWVIVLLVIVLLF. The disordered stretch occupies residues 46-79; that stretch reads DDEEEAKNEPKTLDAQATQTKVHETSEIKSKQES. A compositionally biased stretch (basic and acidic residues) spans 66-79; the sequence is KVHETSEIKSKQES.

Belongs to the TatA/E family. In terms of assembly, the Tat system comprises two distinct complexes: a TatABC complex, containing multiple copies of TatA, TatB and TatC subunits, and a separate TatA complex, containing only TatA subunits. Substrates initially bind to the TatABC complex, which probably triggers association of the separate TatA complex to form the active translocon.

Its subcellular location is the cell inner membrane. Part of the twin-arginine translocation (Tat) system that transports large folded proteins containing a characteristic twin-arginine motif in their signal peptide across membranes. TatA could form the protein-conducting channel of the Tat system. The protein is Sec-independent protein translocase protein TatA of Helicobacter pylori (strain HPAG1).